The sequence spans 222 residues: uncharacterized protein (222 aa).

Helical transmembrane passes span 25 to 45 (LLWL…PATA), 80 to 100 (LLGA…ALIY), 111 to 131 (FAIM…FPLL), and 160 to 180 (LALT…VPFF).

The protein resides in the cell membrane. This is an uncharacterized protein from Bacillus subtilis (strain 168).